The sequence spans 291 residues: MFEGVLPAIVTPFQNDHAKSLDLLGLQSNLAFLVSKGVHGVVPCGSTGESATLSFEEHVKVIEATIEAVAGKVPVLAGAGSNNTDEAIRFTRSAKDLGADGVLIISPYYNRPNRSGLIKHFSAIADLDIPVVLYNVPSRTGQNLSPDLVAELSRHPNIVGIKEASGNISQVSQIIEETMDQDFTVISGDDGMTLPVMALGGGGVISVAANVEPERMVGMYRAYTEGDWDDAISLHYELAPLFRALFIDSNPIPVKKAINLRGLASGPLRLPLDELDAEKTAALTEVLSTYD.

Thr-47 is a pyruvate binding site. The active-site Proton donor/acceptor is Tyr-134. Lys-162 acts as the Schiff-base intermediate with substrate in catalysis. Ile-205 serves as a coordination point for pyruvate.

Belongs to the DapA family. As to quaternary structure, homotetramer; dimer of dimers.

It is found in the cytoplasm. The enzyme catalyses L-aspartate 4-semialdehyde + pyruvate = (2S,4S)-4-hydroxy-2,3,4,5-tetrahydrodipicolinate + H2O + H(+). It functions in the pathway amino-acid biosynthesis; L-lysine biosynthesis via DAP pathway; (S)-tetrahydrodipicolinate from L-aspartate: step 3/4. Catalyzes the condensation of (S)-aspartate-beta-semialdehyde [(S)-ASA] and pyruvate to 4-hydroxy-tetrahydrodipicolinate (HTPA). This Methanosphaerula palustris (strain ATCC BAA-1556 / DSM 19958 / E1-9c) protein is 4-hydroxy-tetrahydrodipicolinate synthase.